Reading from the N-terminus, the 281-residue chain is MTQILNAKPVVQAMKENLRQEVAALQAEGKAPTLGIIRVGSRPDDVYYENNIIKNCETIGIATKTYPLDLNISMEEFTAVMTQVNDDPSVHGIMLFRPLPPQLDEEVIKHLISADKDIDCMSPLNLEKVFEGDMSGLLPCTPAAVMAILRHYEIELKGANAVVMGRSLVVGKPLSMMLLQDNATVTICHSRTRNLPEVAKNADIVIAAMGRARMIDDNYVAENSIVIDVGINDAGDGKICGDVDYDAVVDKVKAITPVPGGVGSVTTTILLNNLVRACKSQ.

NADP(+) contacts are provided by residues Gly-165–Ser-167, Ser-190, and Ile-231.

This sequence belongs to the tetrahydrofolate dehydrogenase/cyclohydrolase family. In terms of assembly, homodimer.

The enzyme catalyses (6R)-5,10-methylene-5,6,7,8-tetrahydrofolate + NADP(+) = (6R)-5,10-methenyltetrahydrofolate + NADPH. The catalysed reaction is (6R)-5,10-methenyltetrahydrofolate + H2O = (6R)-10-formyltetrahydrofolate + H(+). It functions in the pathway one-carbon metabolism; tetrahydrofolate interconversion. Catalyzes the oxidation of 5,10-methylenetetrahydrofolate to 5,10-methenyltetrahydrofolate and then the hydrolysis of 5,10-methenyltetrahydrofolate to 10-formyltetrahydrofolate. This chain is Bifunctional protein FolD 1, found in Desulfitobacterium hafniense (strain Y51).